Consider the following 145-residue polypeptide: uncharacterized protein (145 aa).

M1 carries the post-translational modification N-acetylmethionine. The interval 15 to 41 (QLKNNSGGTNGDRNSGANNGGGENSAP) is disordered. Polar residues predominate over residues 16–27 (LKNNSGGTNGDR). S121 and S126 each carry phosphoserine. The tract at residues 125–145 (NSFDKQNAKNDDDEDDDDFFD) is disordered. Residues 135–145 (DDDEDDDDFFD) show a composition bias toward acidic residues.

The protein belongs to the PDCD5 family.

This is an uncharacterized protein from Saccharomyces cerevisiae (strain ATCC 204508 / S288c) (Baker's yeast).